Consider the following 615-residue polypeptide: Aspartokinase (615 aa).

Disordered regions lie at residues 84–105 and 127–171; these read ALQP…GTAT and SSVS…SISQ. 2 stretches are compositionally biased toward low complexity: residues 90 to 102 and 127 to 164; these read SSSG…SMSG and SSVS…ATPS. Positions 467–537 constitute an ACT domain; that stretch reads IHSNRKTLSH…EVTVSKDMAI (71 aa).

The protein belongs to the aspartokinase family.

It carries out the reaction L-aspartate + ATP = 4-phospho-L-aspartate + ADP. It participates in amino-acid biosynthesis; L-methionine biosynthesis via de novo pathway; L-homoserine from L-aspartate: step 1/3. It functions in the pathway amino-acid biosynthesis; L-threonine biosynthesis; L-threonine from L-aspartate: step 1/5. In terms of biological role, phosphorylates aspartate, the first step in the biosynthesis of amino acids that derive from aspartate (the aspartate family of amino acids), including methioinine and threonine, the latter of which is a precursor to isoleucine. The sequence is that of Aspartokinase from Cryptococcus neoformans var. grubii serotype A (strain H99 / ATCC 208821 / CBS 10515 / FGSC 9487) (Filobasidiella neoformans var. grubii).